The following is a 522-amino-acid chain: Cytochrome P450 4F4 (522 aa).

The next 2 membrane-spanning stretches (helical) occupy residues 15–35 (TSLP…VRVL) and 87–107 (GFMT…PDVI). Glutamate 328 and cysteine 468 together coordinate heme.

Belongs to the cytochrome P450 family. Heme is required as a cofactor. As to expression, expressed in hepatocytes. High expression in liver and kidney. Lower expression in brain.

Its subcellular location is the endoplasmic reticulum membrane. The protein localises to the microsome membrane. The catalysed reaction is (5Z,8Z,11Z,14Z)-eicosatetraenoate + reduced [NADPH--hemoprotein reductase] + O2 = 20-hydroxy-(5Z,8Z,11Z,14Z)-eicosatetraenoate + oxidized [NADPH--hemoprotein reductase] + H2O + H(+). The enzyme catalyses leukotriene B4 + reduced [NADPH--hemoprotein reductase] + O2 = 20-hydroxy-leukotriene B4 + oxidized [NADPH--hemoprotein reductase] + H2O + H(+). It carries out the reaction 6-trans-leukotriene B4 + reduced [NADPH--hemoprotein reductase] + O2 = 20-hydroxy-6-trans-leukotriene B4 + oxidized [NADPH--hemoprotein reductase] + H2O + H(+). It catalyses the reaction prostaglandin A1 + reduced [NADPH--hemoprotein reductase] + O2 = 20-hydroxy prostaglandin A1 + oxidized [NADPH--hemoprotein reductase] + H2O + H(+). The catalysed reaction is prostaglandin E1 + reduced [NADPH--hemoprotein reductase] + O2 = 20-hydroxy prostaglandin E1 + oxidized [NADPH--hemoprotein reductase] + H2O + H(+). Its function is as follows. A cytochrome P450 monooxygenase involved in the metabolism of arachidonic acid and its oxygenated derivatives. Mechanistically, uses molecular oxygen inserting one oxygen atom into a substrate, and reducing the second into a water molecule, with two electrons provided by NADPH via cytochrome P450 reductase (CPR; NADPH-ferrihemoprotein reductase). Participates in the conversion of arachidonic acid to omega-hydroxyeicosatetraenoic acid (20-HETE), a signaling molecule acting both as vasoconstrictive and natriuretic with overall effect on arterial blood pressure. Hydroxylates the terminal carbon (omega-hydroxylation) of inflammatory lipid mediators, including prostaglandin (PG) A1, PGE1 and leukotriene B4 (LTB4), and may play a role in inactivation of these oxylipins during the resolution of inflammation. The polypeptide is Cytochrome P450 4F4 (Rattus norvegicus (Rat)).